A 313-amino-acid polypeptide reads, in one-letter code: Ribosomal RNA small subunit methyltransferase H (313 aa).

Residues G35–H37, D55, F79, D101, and Q108 contribute to the S-adenosyl-L-methionine site.

This sequence belongs to the methyltransferase superfamily. RsmH family.

It localises to the cytoplasm. The enzyme catalyses cytidine(1402) in 16S rRNA + S-adenosyl-L-methionine = N(4)-methylcytidine(1402) in 16S rRNA + S-adenosyl-L-homocysteine + H(+). Its function is as follows. Specifically methylates the N4 position of cytidine in position 1402 (C1402) of 16S rRNA. This Salmonella agona (strain SL483) protein is Ribosomal RNA small subunit methyltransferase H.